Here is a 256-residue protein sequence, read N- to C-terminus: N-acetyl-D-glucosamine kinase (256 aa).

ATP is bound by residues 4–11 and 133–140; these read GFDMGGTK and GVGGGLIV. Zn(2+)-binding residues include His-157, Cys-177, Cys-179, and Cys-184.

It belongs to the ROK (NagC/XylR) family. NagK subfamily.

It catalyses the reaction N-acetyl-D-glucosamine + ATP = N-acetyl-D-glucosamine 6-phosphate + ADP + H(+). Its pathway is cell wall biogenesis; peptidoglycan recycling. Catalyzes the phosphorylation of N-acetyl-D-glucosamine (GlcNAc) derived from cell-wall degradation, yielding GlcNAc-6-P. In Yersinia pestis bv. Antiqua (strain Nepal516), this protein is N-acetyl-D-glucosamine kinase (nagK).